Reading from the N-terminus, the 320-residue chain is o-succinylbenzoate synthase (320 aa).

Catalysis depends on Lys-133, which acts as the Proton donor. Residues Asp-161, Glu-190, and Asp-213 each contribute to the Mg(2+) site. Catalysis depends on Lys-235, which acts as the Proton acceptor.

The protein belongs to the mandelate racemase/muconate lactonizing enzyme family. MenC type 1 subfamily. The cofactor is a divalent metal cation.

The catalysed reaction is (1R,6R)-6-hydroxy-2-succinyl-cyclohexa-2,4-diene-1-carboxylate = 2-succinylbenzoate + H2O. The protein operates within quinol/quinone metabolism; 1,4-dihydroxy-2-naphthoate biosynthesis; 1,4-dihydroxy-2-naphthoate from chorismate: step 4/7. It functions in the pathway quinol/quinone metabolism; menaquinone biosynthesis. Converts 2-succinyl-6-hydroxy-2,4-cyclohexadiene-1-carboxylate (SHCHC) to 2-succinylbenzoate (OSB). The sequence is that of o-succinylbenzoate synthase from Escherichia coli (strain SMS-3-5 / SECEC).